Reading from the N-terminus, the 113-residue chain is U11-theraphotoxin-Hhn1j (113 aa).

The N-terminal stretch at 1–21 (MNTVRVTFLLVFVLAVSLGQA) is a signal peptide. Residues 22–74 (DKDENRMEMQEKTEQGKSYLDFAENLLLQKLEELEAKLLEEDSEESRNSRQKR) constitute a propeptide that is removed on maturation. A compositionally biased stretch (basic and acidic residues) spans 60–69 (LEEDSEESRN). Positions 60–83 (LEEDSEESRNSRQKRCIGEGVPCD) are disordered. 3 disulfides stabilise this stretch: cysteine 75/cysteine 90, cysteine 82/cysteine 95, and cysteine 89/cysteine 110.

The protein belongs to the neurotoxin 14 (magi-1) family. 01 (HNTX-16) subfamily. In terms of tissue distribution, expressed by the venom gland.

It is found in the secreted. Probable ion channel inhibitor. This chain is U11-theraphotoxin-Hhn1j, found in Cyriopagopus hainanus (Chinese bird spider).